The primary structure comprises 331 residues: Cathepsin S (331 aa).

An N-terminal signal peptide occupies residues 1 to 16 (MKWLVGLLPLCSYAVA). A propeptide spans 17–114 (QVHKDPTLDH…VTYRSNSNQK (98 aa)) (activation peptide). The N-linked (GlcNAc...) asparagine glycan is linked to Asn-104. Cystine bridges form between Cys-126-Cys-224, Cys-136-Cys-180, Cys-170-Cys-213, and Cys-272-Cys-320. The active site involves Cys-139. Residues His-278 and Asn-298 contribute to the active site.

This sequence belongs to the peptidase C1 family.

The protein resides in the lysosome. The protein localises to the secreted. Its subcellular location is the cytoplasmic vesicle. It localises to the phagosome. The catalysed reaction is Similar to cathepsin L, but with much less activity on Z-Phe-Arg-|-NHMec, and more activity on the Z-Val-Val-Arg-|-Xaa compound.. Functionally, thiol protease. Key protease responsible for the removal of the invariant chain from MHC class II molecules and MHC class II antigen presentation. The bond-specificity of this proteinase is in part similar to the specificities of cathepsin L. In Canis lupus familiaris (Dog), this protein is Cathepsin S (CTSS).